A 365-amino-acid chain; its full sequence is DNA N6-methyl methyltransferase (365 aa).

It belongs to the MT-A70-like family.

The catalysed reaction is a 2'-deoxyadenosine in DNA + S-adenosyl-L-methionine = an N(6)-methyl-2'-deoxyadenosine in DNA + S-adenosyl-L-homocysteine + H(+). Functionally, methylates DNA on the 6th position of adenine (N(6)-methyladenosine). N(6)-methyladenosine (m6A) DNA is involved in epigenetic transgenerational inheritance. The protein is DNA N6-methyl methyltransferase of Caenorhabditis elegans.